The sequence spans 422 residues: Transcription initiation factor TFIID subunit 15b (422 aa).

Disordered stretches follow at residues 1 to 24, 47 to 94, 111 to 263, and 368 to 422; these read MAGMYNQDGGGGAPIPSYGGDGYG, YGGR…PNPS, ALAP…DAAT, and MAEK…SRPY. 2 stretches are compositionally biased toward gly residues: residues 8–24 and 47–83; these read DGGGGAPIPSYGGDGYG and YGGRGGYGGGGGRGNRGGGGGGYQGGDRGGRGSGGGG. The segment at 84 to 115 adopts a RanBP2-type zinc-finger fold; that stretch reads RDGDWRCPNPSCGNVNFARRVECNKCGALAPS. Gly residues predominate over residues 123-133; the sequence is DRGGGGYSRGG. A compositionally biased stretch (basic and acidic residues) spans 134 to 156; sequence GDSDRGGGRGGRNDSGRSYESSR. 2 stretches are compositionally biased toward gly residues: residues 219-229 and 236-247; these read PSYGGPRGGYG and GGRGGRSGGYDG. Positions 252–263 are enriched in basic and acidic residues; sequence RRQEASYEDAAT. In terms of domain architecture, RRM spans 280 to 371; sequence ARIYISNLPP…NKISVTMAEK (92 aa). Positions 382-397 are enriched in gly residues; it reads RGGGRGGGGGGYGGGG.

This sequence belongs to the TAF15 family. As to quaternary structure, component of the TFIID complex. TFIID is composed of TATA binding protein (TBP) and a number of TBP-associated factors (TAFs) whose MWs range from 14-217 kDa. Interacts with TAF4, TAF4B, TAF5, TAF12B and TAF14. In terms of tissue distribution, expressed in roots, leaves and inflorescences.

The protein resides in the nucleus. Its function is as follows. TAFs are components of the transcription factor IID (TFIID) complex that is essential for mediating regulation of RNA polymerase transcription. This Arabidopsis thaliana (Mouse-ear cress) protein is Transcription initiation factor TFIID subunit 15b (TAF15B).